Reading from the N-terminus, the 160-residue chain is Lipoprotein signal peptidase (160 aa).

2 consecutive transmembrane segments (helical) span residues 59–79 (PEGI…YVWI) and 84–104 (SPLF…NLID). Catalysis depends on residues Asp-113 and Asp-139. The chain crosses the membrane as a helical span at residues 132-152 (WPIFNIADACITIGACLLFFF).

Belongs to the peptidase A8 family.

Its subcellular location is the cell inner membrane. The enzyme catalyses Release of signal peptides from bacterial membrane prolipoproteins. Hydrolyzes -Xaa-Yaa-Zaa-|-(S,diacylglyceryl)Cys-, in which Xaa is hydrophobic (preferably Leu), and Yaa (Ala or Ser) and Zaa (Gly or Ala) have small, neutral side chains.. It participates in protein modification; lipoprotein biosynthesis (signal peptide cleavage). Its function is as follows. This protein specifically catalyzes the removal of signal peptides from prolipoproteins. The sequence is that of Lipoprotein signal peptidase from Chlorobaculum parvum (strain DSM 263 / NCIMB 8327) (Chlorobium vibrioforme subsp. thiosulfatophilum).